The following is a 213-amino-acid chain: ATP phosphoribosyltransferase (213 aa).

Belongs to the ATP phosphoribosyltransferase family. Short subfamily. In terms of assembly, heteromultimer composed of HisG and HisZ subunits.

The protein resides in the cytoplasm. It catalyses the reaction 1-(5-phospho-beta-D-ribosyl)-ATP + diphosphate = 5-phospho-alpha-D-ribose 1-diphosphate + ATP. Its pathway is amino-acid biosynthesis; L-histidine biosynthesis; L-histidine from 5-phospho-alpha-D-ribose 1-diphosphate: step 1/9. Functionally, catalyzes the condensation of ATP and 5-phosphoribose 1-diphosphate to form N'-(5'-phosphoribosyl)-ATP (PR-ATP). Has a crucial role in the pathway because the rate of histidine biosynthesis seems to be controlled primarily by regulation of HisG enzymatic activity. This Chromobacterium violaceum (strain ATCC 12472 / DSM 30191 / JCM 1249 / CCUG 213 / NBRC 12614 / NCIMB 9131 / NCTC 9757 / MK) protein is ATP phosphoribosyltransferase.